A 204-amino-acid polypeptide reads, in one-letter code: UPF0637 protein LMHCC_1566 (204 aa).

Belongs to the UPF0637 family.

The sequence is that of UPF0637 protein LMHCC_1566 from Listeria monocytogenes serotype 4a (strain HCC23).